Here is a 161-residue protein sequence, read N- to C-terminus: ATP synthase subunit b 1 (161 aa).

The chain crosses the membrane as a helical span at residues 3-23 (LDATFYALVGLILFFVLIAYL).

This sequence belongs to the ATPase B chain family. As to quaternary structure, F-type ATPases have 2 components, F(1) - the catalytic core - and F(0) - the membrane proton channel. F(1) has five subunits: alpha(3), beta(3), gamma(1), delta(1), epsilon(1). F(0) has three main subunits: a(1), b(2) and c(10-14). The alpha and beta chains form an alternating ring which encloses part of the gamma chain. F(1) is attached to F(0) by a central stalk formed by the gamma and epsilon chains, while a peripheral stalk is formed by the delta and b chains.

It is found in the cell inner membrane. Its function is as follows. F(1)F(0) ATP synthase produces ATP from ADP in the presence of a proton or sodium gradient. F-type ATPases consist of two structural domains, F(1) containing the extramembraneous catalytic core and F(0) containing the membrane proton channel, linked together by a central stalk and a peripheral stalk. During catalysis, ATP synthesis in the catalytic domain of F(1) is coupled via a rotary mechanism of the central stalk subunits to proton translocation. In terms of biological role, component of the F(0) channel, it forms part of the peripheral stalk, linking F(1) to F(0). In Rhizobium meliloti (strain 1021) (Ensifer meliloti), this protein is ATP synthase subunit b 1.